A 314-amino-acid chain; its full sequence is 4-hydroxy-3-methylbut-2-enyl diphosphate reductase (314 aa).

C12 serves as a coordination point for [4Fe-4S] cluster. (2E)-4-hydroxy-3-methylbut-2-enyl diphosphate contacts are provided by H41 and H74. 2 residues coordinate dimethylallyl diphosphate: H41 and H74. Isopentenyl diphosphate contacts are provided by H41 and H74. C96 is a [4Fe-4S] cluster binding site. H124 contributes to the (2E)-4-hydroxy-3-methylbut-2-enyl diphosphate binding site. Position 124 (H124) interacts with dimethylallyl diphosphate. H124 provides a ligand contact to isopentenyl diphosphate. The Proton donor role is filled by E126. T167 provides a ligand contact to (2E)-4-hydroxy-3-methylbut-2-enyl diphosphate. C197 lines the [4Fe-4S] cluster pocket. Positions 225, 226, 227, and 269 each coordinate (2E)-4-hydroxy-3-methylbut-2-enyl diphosphate. Dimethylallyl diphosphate is bound by residues S225, S226, N227, and S269. Isopentenyl diphosphate contacts are provided by S225, S226, N227, and S269.

The protein belongs to the IspH family. It depends on [4Fe-4S] cluster as a cofactor.

The catalysed reaction is isopentenyl diphosphate + 2 oxidized [2Fe-2S]-[ferredoxin] + H2O = (2E)-4-hydroxy-3-methylbut-2-enyl diphosphate + 2 reduced [2Fe-2S]-[ferredoxin] + 2 H(+). The enzyme catalyses dimethylallyl diphosphate + 2 oxidized [2Fe-2S]-[ferredoxin] + H2O = (2E)-4-hydroxy-3-methylbut-2-enyl diphosphate + 2 reduced [2Fe-2S]-[ferredoxin] + 2 H(+). Its pathway is isoprenoid biosynthesis; dimethylallyl diphosphate biosynthesis; dimethylallyl diphosphate from (2E)-4-hydroxy-3-methylbutenyl diphosphate: step 1/1. It functions in the pathway isoprenoid biosynthesis; isopentenyl diphosphate biosynthesis via DXP pathway; isopentenyl diphosphate from 1-deoxy-D-xylulose 5-phosphate: step 6/6. Its function is as follows. Catalyzes the conversion of 1-hydroxy-2-methyl-2-(E)-butenyl 4-diphosphate (HMBPP) into a mixture of isopentenyl diphosphate (IPP) and dimethylallyl diphosphate (DMAPP). Acts in the terminal step of the DOXP/MEP pathway for isoprenoid precursor biosynthesis. The chain is 4-hydroxy-3-methylbut-2-enyl diphosphate reductase from Actinobacillus pleuropneumoniae serotype 3 (strain JL03).